A 131-amino-acid chain; its full sequence is UPF0344 protein Sca_0577 (131 aa).

4 helical membrane-spanning segments follow: residues 1–21, 42–62, 69–89, and 99–119; these read MLHL…VSYI, LFLV…FATA, LLTL…VTLV, and GLFW…IILP.

Belongs to the UPF0344 family.

The protein resides in the cell membrane. In Staphylococcus carnosus (strain TM300), this protein is UPF0344 protein Sca_0577.